The chain runs to 148 residues: Cytochrome c oxidase subunit 6, mitochondrial (148 aa).

The N-terminal 40 residues, 1–40 (MLSRAIFRNPVINRTLLRARPGAYHATRLTKNTFIQSRKY), are a transit peptide targeting the mitochondrion.

This sequence belongs to the cytochrome c oxidase subunit 5A family. Component of the cytochrome c oxidase (complex IV, CIV), a multisubunit enzyme composed of 12 subunits. The complex is composed of a catalytic core of 3 subunits COX1, COX2 and COX3, encoded in the mitochondrial DNA, and 9 supernumerary subunits COX4, COX5A (or COX5B), COX6, COX7, COX8, COX9, COX12, COX13 and COX26, which are encoded in the nuclear genome. The complex exists as a monomer or a dimer and forms supercomplexes (SCs) in the inner mitochondrial membrane with a dimer of ubiquinol-cytochrome c oxidoreductase (cytochrome b-c1 complex, complex III, CIII), resulting in 2 different assemblies (supercomplexes III(2)IV and III(2)IV(2)). COX26 interacts with COX1, COX2, COX6 and COX9.

It is found in the mitochondrion inner membrane. Its pathway is energy metabolism; oxidative phosphorylation. Component of the cytochrome c oxidase, the last enzyme in the mitochondrial electron transport chain which drives oxidative phosphorylation. The respiratory chain contains 3 multisubunit complexes succinate dehydrogenase (complex II, CII), ubiquinol-cytochrome c oxidoreductase (cytochrome b-c1 complex, complex III, CIII) and cytochrome c oxidase (complex IV, CIV), that cooperate to transfer electrons derived from NADH and succinate to molecular oxygen, creating an electrochemical gradient over the inner membrane that drives transmembrane transport and the ATP synthase. Cytochrome c oxidase is the component of the respiratory chain that catalyzes the reduction of oxygen to water. Electrons originating from reduced cytochrome c in the intermembrane space (IMS) are transferred via the dinuclear copper A center (CU(A)) of COX2 and heme A of COX1 to the active site in COX1, a binuclear center (BNC) formed by heme A3 and copper B (CU(B)). The BNC reduces molecular oxygen to 2 water molecules using 4 electrons from cytochrome c in the IMS and 4 protons from the mitochondrial matrix. COX6 may stabilize the region of CIV at the interface with CIII, supporting a role in formation or stability of the CIII(2)IV(2) SC. The sequence is that of Cytochrome c oxidase subunit 6, mitochondrial (COX6) from Saccharomyces cerevisiae (strain ATCC 204508 / S288c) (Baker's yeast).